Here is a 671-residue protein sequence, read N- to C-terminus: NADH-quinone oxidoreductase subunit G (671 aa).

A 2Fe-2S ferredoxin-type domain is found at 1–78; sequence MIKLNVDGSE…GMVIHTDTPM (78 aa). [2Fe-2S] cluster is bound by residues C34, C45, C48, and C62. The 4Fe-4S His(Cys)3-ligated-type domain occupies 78-117; that stretch reads MVKKAREGVMEFLLINHPLDCPICDQGGECNLQDQAFRYG. The [4Fe-4S] cluster site is built by H94, C98, C101, C107, C146, C149, C152, and C196. A 4Fe-4S Mo/W bis-MGD-type domain is found at 215–271; the sequence is LKHTASIGVHDAEGSNIRIDSRGDEVMRILPRVNEEINEEWLSDKNRFSYDGLKYQR.

Belongs to the complex I 75 kDa subunit family. It depends on [2Fe-2S] cluster as a cofactor. [4Fe-4S] cluster serves as cofactor.

The enzyme catalyses a quinone + NADH + 5 H(+)(in) = a quinol + NAD(+) + 4 H(+)(out). Functionally, NDH-1 shuttles electrons from NADH, via FMN and iron-sulfur (Fe-S) centers, to quinones in the respiratory chain. Couples the redox reaction to proton translocation (for every two electrons transferred, four hydrogen ions are translocated across the cytoplasmic membrane), and thus conserves the redox energy in a proton gradient. This Rickettsia conorii (strain ATCC VR-613 / Malish 7) protein is NADH-quinone oxidoreductase subunit G (nuoG).